The sequence spans 227 residues: tRNA (guanine-N(1)-)-methyltransferase (227 aa).

S-adenosyl-L-methionine contacts are provided by residues G112 and 131-136 (LGDFVL).

This sequence belongs to the RNA methyltransferase TrmD family. As to quaternary structure, homodimer.

It is found in the cytoplasm. It catalyses the reaction guanosine(37) in tRNA + S-adenosyl-L-methionine = N(1)-methylguanosine(37) in tRNA + S-adenosyl-L-homocysteine + H(+). In terms of biological role, specifically methylates guanosine-37 in various tRNAs. This chain is tRNA (guanine-N(1)-)-methyltransferase, found in Trichodesmium erythraeum (strain IMS101).